The chain runs to 436 residues: Putative actin-fragmin kinase DDB_G0268748 (436 aa).

A disordered region spans residues 14-58 (DKNIDSGSSSSNIGGSSSNSSGTTNKRSSGNFNGSSASSSPSSST). Over residues 18–57 (DSGSSSSNIGGSSSNSSGTTNKRSSGNFNGSSASSSPSSS) the composition is skewed to low complexity.

It belongs to the protein kinase superfamily. AFK Ser/Thr protein kinase family.

The protein is Putative actin-fragmin kinase DDB_G0268748 of Dictyostelium discoideum (Social amoeba).